Reading from the N-terminus, the 208-residue chain is Imidazole glycerol phosphate synthase subunit HisH (208 aa).

Residues 1-206 (MIVIIDYDTG…KEVTYSCKSS (206 aa)) enclose the Glutamine amidotransferase type-1 domain. Cys-79 (nucleophile) is an active-site residue. Catalysis depends on residues His-181 and Glu-183.

In terms of assembly, heterodimer of HisH and HisF.

It is found in the cytoplasm. It carries out the reaction 5-[(5-phospho-1-deoxy-D-ribulos-1-ylimino)methylamino]-1-(5-phospho-beta-D-ribosyl)imidazole-4-carboxamide + L-glutamine = D-erythro-1-(imidazol-4-yl)glycerol 3-phosphate + 5-amino-1-(5-phospho-beta-D-ribosyl)imidazole-4-carboxamide + L-glutamate + H(+). The catalysed reaction is L-glutamine + H2O = L-glutamate + NH4(+). It functions in the pathway amino-acid biosynthesis; L-histidine biosynthesis; L-histidine from 5-phospho-alpha-D-ribose 1-diphosphate: step 5/9. Functionally, IGPS catalyzes the conversion of PRFAR and glutamine to IGP, AICAR and glutamate. The HisH subunit catalyzes the hydrolysis of glutamine to glutamate and ammonia as part of the synthesis of IGP and AICAR. The resulting ammonia molecule is channeled to the active site of HisF. The protein is Imidazole glycerol phosphate synthase subunit HisH of Listeria monocytogenes serovar 1/2a (strain ATCC BAA-679 / EGD-e).